A 109-amino-acid chain; its full sequence is Tyrosine-protein phosphatase 6 (109 aa).

In terms of domain architecture, Tyrosine-protein phosphatase spans 1–109 (YNINVIVMVC…SEDETTPLCV (109 aa)). Asp-76 serves as a coordination point for substrate.

This sequence belongs to the protein-tyrosine phosphatase family.

It carries out the reaction O-phospho-L-tyrosyl-[protein] + H2O = L-tyrosyl-[protein] + phosphate. The chain is Tyrosine-protein phosphatase 6 (STY-6) from Styela plicata (Wrinkled sea squirt).